A 571-amino-acid chain; its full sequence is OTU domain-containing protein 5 (571 aa).

Disordered stretches follow at residues Met1–Gly111 and Pro146–Tyr175. A compositionally biased stretch (pro residues) spans Pro11–Pro30. The span at Arg32–Gly47 shows a compositional bias: gly residues. Over residues Ala63–Pro75 the composition is skewed to pro residues. Phosphoserine is present on Ser64. Residues Ala84–Gln97 are compositionally biased toward low complexity. Ser165 is modified (phosphoserine). Tyr175 bears the Phosphotyrosine mark. The residue at position 177 (Ser177) is a Phosphoserine. Thr195 is modified (phosphothreonine). Residues Phe213 to Pro341 enclose the OTU domain. Residues Met218–Cys224 are cys-loop. Asp221 is a catalytic residue. The Nucleophile role is filled by Cys224. The variable-loop stretch occupies residues Lys273 to Ile283. The residue at position 328 (Ser328) is a Phosphoserine; by MTOR. The his-loop stretch occupies residues Tyr329–His334. The active site involves His334. Ser337 and Ser375 each carry phosphoserine. Positions Ala418–Gly502 are disordered. Low complexity-rich tracts occupy residues Ala430–Ser443 and Ser450–Pro462. Ser452 is modified (phosphoserine). The residue at position 507 (Thr507) is a Phosphothreonine. Ser508 bears the Phosphoserine; by MTOR mark.

Belongs to the peptidase C85 family. As to quaternary structure, interacts with TRAF3. Phosphorylation at Ser-177 is required for deubiquitinating activity. Phosphorylation at Ser-328, Ser-337 and Ser-508 by MTOR promotes its activity. Expressed in various tissues, including the liver and placenta, as well as in peripheral blood leukocytes.

The protein localises to the nucleus. The catalysed reaction is Thiol-dependent hydrolysis of ester, thioester, amide, peptide and isopeptide bonds formed by the C-terminal Gly of ubiquitin (a 76-residue protein attached to proteins as an intracellular targeting signal).. With respect to regulation, inhibited by N-ethyl-maleimide (NEM). In terms of biological role, deubiquitinating enzyme that functions as a negative regulator of the innate immune system. Has peptidase activity towards 'Lys-48'- and 'Lys-63'-linked polyubiquitin chains. Can also cleave 'Lys-11'-linked ubiquitin chains (in vitro). Acts via TRAF3 deubiquitination and subsequent suppression of type I interferon (IFN) production. Controls neuroectodermal differentiation through cleaving 'Lys-48'-linked ubiquitin chains to counteract degradation of select chromatin regulators such as ARID1A, HDAC2 and HCF1. Acts as a positive regulator of mTORC1 and mTORC2 signaling following phosphorylation by MTOR: acts by mediating deubiquitination of BTRC, leading to its stability. In Homo sapiens (Human), this protein is OTU domain-containing protein 5.